Reading from the N-terminus, the 715-residue chain is DNA mismatch repair protein MLH3 (715 aa).

It belongs to the DNA mismatch repair MutL/HexB family. As to quaternary structure, heterodimer of MLH1 and MLH3, called MutLbeta, which is involved in correction of a specific subset of IDLs when associated with MutSbeta. Forms a ternary complex with a SGS1-TOP3 heterodimer during meiosis.

The protein resides in the nucleus. In terms of biological role, involved in DNA mismatch repair (MMR), correcting insertion-deletion loops (IDLs) resulting from DNA replication, DNA damage or from recombination events between non-identical sequences during meiosis. Component of the MutLbeta heterodimer, which probably forms a ternary complex with the MutSbeta heterodimer that initially recognizes the DNA mismatches. This complex is thought to be responsible for directing the downstream MMR events, including strand discrimination, excision, and resynthesis. Plays a major role in promoting meiotic crossing-over and is involved in maintaining the genetic stability of simple sequence repeats by correction of frameshift intermediates. In Saccharomyces cerevisiae (strain ATCC 204508 / S288c) (Baker's yeast), this protein is DNA mismatch repair protein MLH3 (MLH3).